Here is a 168-residue protein sequence, read N- to C-terminus: INO80 complex subunit 3 (168 aa).

Residues 115-129 (TNSTLSTPKSFHSPL) show a composition bias toward polar residues. The disordered stretch occupies residues 115–168 (TNSTLSTPKSFHSPLQSRGISPSSAQSSAAVSSSRKQKRKRTSEGPSERRARKK). Over residues 130-148 (QSRGISPSSAQSSAAVSSS) the composition is skewed to low complexity. Positions 156–168 (TSEGPSERRARKK) are enriched in basic and acidic residues.

Component of the INO80 chromatin remodeling complex.

It is found in the nucleus. Component of the INO80 complex which remodels chromatin by shifting nucleosomes and is involved in DNA repair. The chain is INO80 complex subunit 3 (iec3) from Schizosaccharomyces pombe (strain 972 / ATCC 24843) (Fission yeast).